The sequence spans 739 residues: Phosphoribosylformylglycinamidine synthase subunit PurL (739 aa).

The active site involves histidine 55. 2 residues coordinate ATP: tyrosine 58 and lysine 97. Glutamate 99 is a binding site for Mg(2+). Substrate contacts are provided by residues 100–103 and arginine 122; that span reads SHNH. The Proton acceptor role is filled by histidine 101. Residue aspartate 123 coordinates Mg(2+). A substrate-binding site is contributed by glutamine 246. Mg(2+) is bound at residue aspartate 276. Residue 320–322 participates in substrate binding; the sequence is ESQ. ATP-binding residues include aspartate 502 and glycine 539. Asparagine 540 provides a ligand contact to Mg(2+). Serine 542 provides a ligand contact to substrate.

Belongs to the FGAMS family. In terms of assembly, monomer. Part of the FGAM synthase complex composed of 1 PurL, 1 PurQ and 2 PurS subunits.

It is found in the cytoplasm. The catalysed reaction is N(2)-formyl-N(1)-(5-phospho-beta-D-ribosyl)glycinamide + L-glutamine + ATP + H2O = 2-formamido-N(1)-(5-O-phospho-beta-D-ribosyl)acetamidine + L-glutamate + ADP + phosphate + H(+). The protein operates within purine metabolism; IMP biosynthesis via de novo pathway; 5-amino-1-(5-phospho-D-ribosyl)imidazole from N(2)-formyl-N(1)-(5-phospho-D-ribosyl)glycinamide: step 1/2. Part of the phosphoribosylformylglycinamidine synthase complex involved in the purines biosynthetic pathway. Catalyzes the ATP-dependent conversion of formylglycinamide ribonucleotide (FGAR) and glutamine to yield formylglycinamidine ribonucleotide (FGAM) and glutamate. The FGAM synthase complex is composed of three subunits. PurQ produces an ammonia molecule by converting glutamine to glutamate. PurL transfers the ammonia molecule to FGAR to form FGAM in an ATP-dependent manner. PurS interacts with PurQ and PurL and is thought to assist in the transfer of the ammonia molecule from PurQ to PurL. The chain is Phosphoribosylformylglycinamidine synthase subunit PurL from Lactiplantibacillus plantarum (strain ATCC BAA-793 / NCIMB 8826 / WCFS1) (Lactobacillus plantarum).